A 597-amino-acid chain; its full sequence is Probable E3 ubiquitin-protein ligase ARI1 (597 aa).

Residues 119 to 333 (SQMSCDVCME…IAGHSCGRYQ (215 aa)) form a TRIAD supradomain region. Residues Cys123, Cys126, Cys140, His142, Cys145, Cys148, Cys167, Cys172, Cys214, Cys220, Cys236, Cys238, Cys243, Cys246, His251, Cys256, Cys283, and Cys286 each coordinate Zn(2+). The RING-type 1 zinc finger occupies 123-172 (CDVCMEDLPGDHMTRMDCGHCFCNNCWTEHFTVQINEGQSKRIRCMAHQC). The IBR-type zinc-finger motif lies at 194 to 256 (AKFDRYLLES…LCQAHSPCSC (63 aa)). The RING-type 2; atypical zinc finger occupies 283–311 (CPKCYKPVEKNGGCNLVRCICGQCFCWLC). The active site involves Cys296. Positions 301, 303, 308, 311, 319, and 329 each coordinate Zn(2+). Positions 536 to 575 (FQPLDSGTSGVTSRPEQASGSRSSEDTICSSSQKRPKKEG) are disordered. Residues 540-568 (DSGTSGVTSRPEQASGSRSSEDTICSSSQ) show a composition bias toward polar residues.

This sequence belongs to the RBR family. Ariadne subfamily. Requires Zn(2+) as cofactor. Ubiquitous.

The catalysed reaction is [E2 ubiquitin-conjugating enzyme]-S-ubiquitinyl-L-cysteine + [acceptor protein]-L-lysine = [E2 ubiquitin-conjugating enzyme]-L-cysteine + [acceptor protein]-N(6)-ubiquitinyl-L-lysine.. The protein operates within protein modification; protein ubiquitination. Its function is as follows. Might act as an E3 ubiquitin-protein ligase, or as part of E3 complex, which accepts ubiquitin from specific E2 ubiquitin-conjugating enzymes and then transfers it to substrates. The chain is Probable E3 ubiquitin-protein ligase ARI1 (ARI1) from Arabidopsis thaliana (Mouse-ear cress).